Reading from the N-terminus, the 644-residue chain is 3D-(3,5/4)-trihydroxycyclohexane-1,2-dione hydrolase (644 aa).

A thiamine diphosphate-binding site is contributed by E65. A thiamine pyrophosphate binding region spans residues 442-522 (SLPGDLQRMW…INVLLFDNSG (81 aa)). Mg(2+) contacts are provided by D493 and N520.

The protein belongs to the TPP enzyme family. The cofactor is Mg(2+). Requires thiamine diphosphate as cofactor.

It catalyses the reaction 3D-3,5/4-trihydroxycyclohexane-1,2-dione + H2O = 5-deoxy-D-glucuronate + H(+). Its pathway is polyol metabolism; myo-inositol degradation into acetyl-CoA; acetyl-CoA from myo-inositol: step 3/7. Involved in the cleavage of the C1-C2 bond of 3D-(3,5/4)-trihydroxycyclohexane-1,2-dione (THcHDO) to yield 5-deoxy-glucuronate (5DG). The protein is 3D-(3,5/4)-trihydroxycyclohexane-1,2-dione hydrolase of Bacillus cereus (strain AH820).